The following is a 178-amino-acid chain: Crossover junction endodeoxyribonuclease RuvC (178 aa).

Active-site residues include Asp-21, Glu-81, and His-154. Mg(2+) is bound by residues Asp-21, Glu-81, and His-154.

The protein belongs to the RuvC family. In terms of assembly, homodimer which binds Holliday junction (HJ) DNA. The HJ becomes 2-fold symmetrical on binding to RuvC with unstacked arms; it has a different conformation from HJ DNA in complex with RuvA. In the full resolvosome a probable DNA-RuvA(4)-RuvB(12)-RuvC(2) complex forms which resolves the HJ. The cofactor is Mg(2+).

Its subcellular location is the cytoplasm. The catalysed reaction is Endonucleolytic cleavage at a junction such as a reciprocal single-stranded crossover between two homologous DNA duplexes (Holliday junction).. In terms of biological role, the RuvA-RuvB-RuvC complex processes Holliday junction (HJ) DNA during genetic recombination and DNA repair. Endonuclease that resolves HJ intermediates. Cleaves cruciform DNA by making single-stranded nicks across the HJ at symmetrical positions within the homologous arms, yielding a 5'-phosphate and a 3'-hydroxyl group; requires a central core of homology in the junction. The consensus cleavage sequence is 5'-(A/T)TT(C/G)-3'. Cleavage occurs on the 3'-side of the TT dinucleotide at the point of strand exchange. HJ branch migration catalyzed by RuvA-RuvB allows RuvC to scan DNA until it finds its consensus sequence, where it cleaves and resolves the cruciform DNA. This Treponema denticola (strain ATCC 35405 / DSM 14222 / CIP 103919 / JCM 8153 / KCTC 15104) protein is Crossover junction endodeoxyribonuclease RuvC.